The chain runs to 327 residues: MSFESKKPMRTWSHLAEMRKKPSEYDIVSRKLHYSTNNPDSPWELSPDSPMNLWYKQYRNASPLKHDNWDAFTDPDQLVYRTYNLMQDGQESYVQSLFDQFNEREHDQMVREGWEHTMARCYSPLRYLFHCLQMSSAYVQQMAPASTISNCCILQTADSLRWLTHTAYRTHELSLTYPDAGLGEHERELWEKEPGWQGLRELMEKQLTAFDWGEAFVSLNLVVKPMIVESIFKPLQQQAWENNDTLLPLLIDSQLKDAERHSRWSKALVKHALENPDNHAVIEGWIEKWRPLADRAAEAYLSMLSSDILPAQYLERSTSLRASILTV.

The protein belongs to the TmoE/XamoE family. In terms of assembly, the alkene monooxygenase multicomponent enzyme system is composed of an electron transfer component and a monooxygenase component interacting with the effector protein TmoD. The electron transfer component is composed of a ferredoxin reductase (TmoF) and a ferredoxin (TmoC), and the monooxygenase component is formed by a heterohexamer (dimer of heterotrimers) of two alpha subunits (TmoA), two beta subunits (TmoE) and two gamma subunits (TmoB).

It carries out the reaction toluene + NADH + O2 + H(+) = 4-methylphenol + NAD(+) + H2O. It participates in xenobiotic degradation; toluene degradation. Its activity is regulated as follows. Inhibited by Zn(2+) and Cu(2+). Component of the toluene-4-monooxygenase multicomponent enzyme system which catalyzes the O2- and NADH-dependent hydroxylation of toluene to form p-cresol. Also able to convert benzene to phenol, catechol, and 1,2,3-trihydroxybenzene by successive hydroxylations. The protein is Toluene-4-monooxygenase system, hydroxylase component subunit beta of Ectopseudomonas mendocina (Pseudomonas mendocina).